A 260-amino-acid chain; its full sequence is Purine nucleoside phosphorylase PD_1754 (260 aa).

Residues H79, C120, and H137 each contribute to the Zn(2+) site.

Belongs to the purine nucleoside phosphorylase YfiH/LACC1 family. As to quaternary structure, homodimer. Cu(2+) is required as a cofactor. The cofactor is Zn(2+).

It catalyses the reaction adenosine + phosphate = alpha-D-ribose 1-phosphate + adenine. The enzyme catalyses S-methyl-5'-thioadenosine + phosphate = 5-(methylsulfanyl)-alpha-D-ribose 1-phosphate + adenine. It carries out the reaction inosine + phosphate = alpha-D-ribose 1-phosphate + hypoxanthine. The catalysed reaction is adenosine + H2O + H(+) = inosine + NH4(+). In terms of biological role, purine nucleoside enzyme that catalyzes the phosphorolysis of adenosine and inosine nucleosides, yielding D-ribose 1-phosphate and the respective free bases, adenine and hypoxanthine. Also catalyzes the phosphorolysis of S-methyl-5'-thioadenosine into adenine and S-methyl-5-thio-alpha-D-ribose 1-phosphate. Also has adenosine deaminase activity. The polypeptide is Purine nucleoside phosphorylase PD_1754 (Xylella fastidiosa (strain Temecula1 / ATCC 700964)).